Here is a 264-residue protein sequence, read N- to C-terminus: GTP cyclohydrolase FolE2 (264 aa).

It belongs to the GTP cyclohydrolase IV family.

It catalyses the reaction GTP + H2O = 7,8-dihydroneopterin 3'-triphosphate + formate + H(+). It functions in the pathway cofactor biosynthesis; 7,8-dihydroneopterin triphosphate biosynthesis; 7,8-dihydroneopterin triphosphate from GTP: step 1/1. Functionally, converts GTP to 7,8-dihydroneopterin triphosphate. The polypeptide is GTP cyclohydrolase FolE2 (Akkermansia muciniphila (strain ATCC BAA-835 / DSM 22959 / JCM 33894 / BCRC 81048 / CCUG 64013 / CIP 107961 / Muc)).